We begin with the raw amino-acid sequence, 248 residues long: 3-deoxy-manno-octulosonate cytidylyltransferase (248 aa).

The protein belongs to the KdsB family.

Its subcellular location is the cytoplasm. It catalyses the reaction 3-deoxy-alpha-D-manno-oct-2-ulosonate + CTP = CMP-3-deoxy-beta-D-manno-octulosonate + diphosphate. It participates in nucleotide-sugar biosynthesis; CMP-3-deoxy-D-manno-octulosonate biosynthesis; CMP-3-deoxy-D-manno-octulosonate from 3-deoxy-D-manno-octulosonate and CTP: step 1/1. The protein operates within bacterial outer membrane biogenesis; lipopolysaccharide biosynthesis. Functionally, activates KDO (a required 8-carbon sugar) for incorporation into bacterial lipopolysaccharide in Gram-negative bacteria. The polypeptide is 3-deoxy-manno-octulosonate cytidylyltransferase (Enterobacter sp. (strain 638)).